We begin with the raw amino-acid sequence, 233 residues long: Large ribosomal subunit protein uL1 (233 aa).

It belongs to the universal ribosomal protein uL1 family. In terms of assembly, part of the 50S ribosomal subunit.

Its function is as follows. Binds directly to 23S rRNA. The L1 stalk is quite mobile in the ribosome, and is involved in E site tRNA release. In terms of biological role, protein L1 is also a translational repressor protein, it controls the translation of the L11 operon by binding to its mRNA. The polypeptide is Large ribosomal subunit protein uL1 (Aeromonas hydrophila subsp. hydrophila (strain ATCC 7966 / DSM 30187 / BCRC 13018 / CCUG 14551 / JCM 1027 / KCTC 2358 / NCIMB 9240 / NCTC 8049)).